The primary structure comprises 406 residues: MGPHTQLLILLLLSWLGPLQGQQHHLVEYMERRLAALEERLAQCQDQSSRHAAELRDFKNKMLPLLEVAEKEREALRTEADTISGRVDRLEREVDYLETQNPALPCVEVDEKVTGGPGTKGKGRRNEKYDMITDCGYTISQVRSMKILKRFGGPAGLWTKDPLGPAEKIYVLDGTQNDTAFVFPRLRDFTLAMAARKASRVRVPFPWVGTGQLVYGGFLYYARRPPGGPGGGGELQNTLQLIKFHLANRTVVDSSVFPAEGLIPPYGLTADTYIDLAADEEGLWAVYATREDDRHLCLAKLDPQTLDTEQQWDTPCPRENAEAAFVICGTLYVVYNTRPASRARIQCSFDASGTLTPERAALPYFPRRYGAHASLRYNPRERQLYAWDDGYQIVYKLEMRKKEEEV.

Positions 1–21 (MGPHTQLLILLLLSWLGPLQG) are cleaved as a signal peptide. The stretch at 22–101 (QQHHLVEYME…REVDYLETQN (80 aa)) forms a coiled coil. Residues 134-401 (DCGYTISQVR…QIVYKLEMRK (268 aa)) enclose the Olfactomedin-like domain. Cys-135 and Cys-328 are oxidised to a cystine. N-linked (GlcNAc...) asparagine glycosylation is present at Asn-248.

This sequence belongs to the OLFML3 family.

The protein resides in the secreted. Its function is as follows. Secreted scaffold protein that plays an essential role in dorsoventral patterning during early development. Stabilizes axial formation by restricting chordin (CHRD) activity on the dorsal side. Acts by facilitating the association between the tolloid proteases and their substrate chordin (CHRD), leading to enhance chordin (CHRD) degradation. May have matrix-related function involved in placental and embryonic development, or play a similar role in other physiological processes. The chain is Olfactomedin-like protein 3 (OLFML3) from Bos taurus (Bovine).